We begin with the raw amino-acid sequence, 168 residues long: Protein OPG162 (168 aa).

Residues 1-14 (MKSLNRQTVSMFKK) are Intravirion-facing. Residues 15-37 (LSVPAAIMMILSTIISGIGTFLH) traverse the membrane as a helical segment. Topologically, residues 38–168 (YKEELMPSAC…SVLCVKKFYK (131 aa)) are virion surface. One can recognise a C-type lectin domain in the interval 54–163 (YDKHCYLDTN…CKSTQSVLCV (110 aa)). 2 cysteine pairs are disulfide-bonded: Cys75/Cys162 and Cys141/Cys154. Asn133 carries an N-linked (GlcNAc...) asparagine; by host glycan.

It belongs to the orthopoxvirus OPG162 protein family. Interacts with protein OPG161. Interacts with protein OPG164. Interacts with protein OPG190.

The protein localises to the virion membrane. The protein resides in the host Golgi apparatus. Functionally, forms a complex with OPG162 and OPG190 to coordinate the incorporation of OPG164 into wrapped enveloped virion (EV) membranes and, subsequently, the production of actin tails. Therefore plays an essential role in efficient cell-to-cell spread of viral particles. The chain is Protein OPG162 (OPG162) from Homo sapiens (Human).